The following is a 273-amino-acid chain: Dermonecrotic toxin LspaSicTox-alphaIA2iii (273 aa).

Histidine 5 is a catalytic residue. Mg(2+) contacts are provided by glutamate 25 and aspartate 27. Histidine 41 acts as the Nucleophile in catalysis. 2 disulfide bridges follow: cysteine 45–cysteine 51 and cysteine 47–cysteine 190. Residue aspartate 85 participates in Mg(2+) binding.

Belongs to the arthropod phospholipase D family. Class II subfamily. The cofactor is Mg(2+). Expressed by the venom gland.

Its subcellular location is the secreted. It carries out the reaction an N-(acyl)-sphingosylphosphocholine = an N-(acyl)-sphingosyl-1,3-cyclic phosphate + choline. It catalyses the reaction an N-(acyl)-sphingosylphosphoethanolamine = an N-(acyl)-sphingosyl-1,3-cyclic phosphate + ethanolamine. The catalysed reaction is a 1-acyl-sn-glycero-3-phosphocholine = a 1-acyl-sn-glycero-2,3-cyclic phosphate + choline. The enzyme catalyses a 1-acyl-sn-glycero-3-phosphoethanolamine = a 1-acyl-sn-glycero-2,3-cyclic phosphate + ethanolamine. Functionally, dermonecrotic toxins cleave the phosphodiester linkage between the phosphate and headgroup of certain phospholipids (sphingolipid and lysolipid substrates), forming an alcohol (often choline) and a cyclic phosphate. This toxin acts on sphingomyelin (SM). It may also act on ceramide phosphoethanolamine (CPE), lysophosphatidylcholine (LPC) and lysophosphatidylethanolamine (LPE), but not on lysophosphatidylserine (LPS), and lysophosphatidylglycerol (LPG). It acts by transphosphatidylation, releasing exclusively cyclic phosphate products as second products. Induces dermonecrosis, hemolysis, increased vascular permeability, edema, inflammatory response, and platelet aggregation. This is Dermonecrotic toxin LspaSicTox-alphaIA2iii from Loxosceles spadicea (Recluse spider).